The primary structure comprises 211 residues: Small ribosomal subunit protein uS3 (211 aa).

The 69-residue stretch at leucine 38–arginine 106 folds into the KH type-2 domain.

It belongs to the universal ribosomal protein uS3 family. Part of the 30S ribosomal subunit. Forms a tight complex with proteins S10 and S14.

In terms of biological role, binds the lower part of the 30S subunit head. Binds mRNA in the 70S ribosome, positioning it for translation. The polypeptide is Small ribosomal subunit protein uS3 (Geobacter sp. (strain M21)).